We begin with the raw amino-acid sequence, 941 residues long: HMG box transcription factor BBX (941 aa).

The span at 1–18 (MKGSNRNKDHSAEGEGVG) shows a compositional bias: basic and acidic residues. Disordered stretches follow at residues 1 to 21 (MKGS…GKRP), 39 to 80 (FSEE…EQRA), 157 to 200 (VKSP…FGMA), and 221 to 242 (TPEV…LRQK). 2 stretches are compositionally biased toward acidic residues: residues 39–52 (FSEE…EEDI) and 63–75 (LEQD…DDES). Residues 80-148 (ARRPMNAFLL…AFMKANPGYK (69 aa)) constitute a DNA-binding region (HMG box). Residues 177-191 (SSRDLPSPKKAKTEE) show a composition bias toward basic and acidic residues. Serine 243 carries the post-translational modification Phosphoserine. Residues 326 to 370 (GRIKELEKGKEEKEIKMEKTDETRLQKEAEFEKSAKENLRDSKEL) adopt a coiled-coil conformation. Lysine 385 is covalently cross-linked (Glycyl lysine isopeptide (Lys-Gly) (interchain with G-Cter in SUMO2)). The segment at 438–482 (IEDPAALNKPEKLKKKKKKSKMDRHGNDKSTPKKTCKKRQSSESD) is disordered. The segment covering 449–459 (KLKKKKKKSKM) has biased composition (basic residues). Residues serine 478 and serine 485 each carry the phosphoserine modification. Basic and acidic residues-rich tracts occupy residues 499-508 (GIEKLGDTPR) and 536-552 (KKMS…ESRP). Disordered regions lie at residues 499–600 (GIEK…SDCH) and 635–677 (NVDR…KKTK). Residue lysine 573 forms a Glycyl lysine isopeptide (Lys-Gly) (interchain with G-Cter in SUMO2) linkage. The segment covering 661–670 (TFSQSGTSGS) has biased composition (low complexity). Lysine 696 participates in a covalent cross-link: Glycyl lysine isopeptide (Lys-Gly) (interchain with G-Cter in SUMO2). Serine 704 carries the phosphoserine modification. 3 disordered regions span residues 714 to 771 (PVPR…DKWS), 803 to 888 (IPSI…SSTP), and 912 to 941 (HRGQ…CADQ). Polar residues predominate over residues 723–742 (GNVSSEPTKTSKGPFQSQKK). A compositionally biased stretch (basic residues) spans 743-757 (NLFHKIVSKYKHKKE). Basic and acidic residues predominate over residues 758–771 (KPNVPEKGSGDKWS). The segment covering 805–817 (SIFNTPEPTTTQE) has biased composition (polar residues). Serine 822 carries the phosphoserine modification. Residues 823–834 (QKRKARKTKITH) are compositionally biased toward basic residues. Serine 844 is modified (phosphoserine). Basic and acidic residues predominate over residues 866–882 (TETDCNDKCSHNTEVGE).

It localises to the nucleus. In terms of biological role, transcription factor that is necessary for cell cycle progression from G1 to S phase. The protein is HMG box transcription factor BBX (BBX) of Homo sapiens (Human).